A 310-amino-acid polypeptide reads, in one-letter code: MRLVFAGTPEPALPSLQRLIDSDRHEVIAVMTRPDAVAGRRGRPSPSPVAQLAAAHGIPVLKPARPNSGEFVAELSALSPDCCAVVAYGALLGDALLAVPAHGWVNLHFSVLPAWRGAAPVQAALAAGDEVTGATTFQIERSLDSGPVYGVVTETIRPTDTAGDLLERLSVSGAGLLEATMDGIEDGTLTAVPQPPEGVSVAPKVTVDDARIRWELPAHVVDRRVRSVTPNPGAWTMIGDQRIKVGPVTVAGDGPKGLEPGEIRVDKKHIHVGTGSDAVLLGTVQPPGKKPMNAADWARGARLDENGWAR.

110 to 113 (SVLP) contributes to the (6S)-5,6,7,8-tetrahydrofolate binding site.

It belongs to the Fmt family.

It carries out the reaction L-methionyl-tRNA(fMet) + (6R)-10-formyltetrahydrofolate = N-formyl-L-methionyl-tRNA(fMet) + (6S)-5,6,7,8-tetrahydrofolate + H(+). Attaches a formyl group to the free amino group of methionyl-tRNA(fMet). The formyl group appears to play a dual role in the initiator identity of N-formylmethionyl-tRNA by promoting its recognition by IF2 and preventing the misappropriation of this tRNA by the elongation apparatus. In Mycolicibacterium vanbaalenii (strain DSM 7251 / JCM 13017 / BCRC 16820 / KCTC 9966 / NRRL B-24157 / PYR-1) (Mycobacterium vanbaalenii), this protein is Methionyl-tRNA formyltransferase.